A 463-amino-acid polypeptide reads, in one-letter code: NADH-ubiquinone oxidoreductase chain 4 (463 aa).

The next 13 helical transmembrane spans lie at 24 to 44 (LWAGAIFQSALLSLLSLIVLN), 62 to 82 (TISAPLIILSCWLAPIALIAS), 98 to 118 (IIMIIVITGALIITFSSLELI), 119 to 139 (LFYIVVETTLIPTLILITRWG), 151 to 171 (FMFYTLFGSLPLLIAIIAIYI), 198 to 218 (WALSINCFFNNLPVYGFHLWL), 232 to 252 (ILAAILLKIGGYGLMRLIALF), 260 to 280 (LSLALIVFCTWGALITSVICV), 285 to 305 (LKALIAYSSVGHMSIVAAAIF), 310 to 330 (WGMNGALMLMVAHGLVSSALF), 353 to 373 (LLLPLSTLWWLLMCAANLGLP), 404 to 424 (VFGAIYSLMIFQLSQQGTPFT), and 442 to 462 (LHILPLILIMINPFSALIAWL).

Belongs to the complex I subunit 4 family.

The protein resides in the mitochondrion membrane. It catalyses the reaction a ubiquinone + NADH + 5 H(+)(in) = a ubiquinol + NAD(+) + 4 H(+)(out). In terms of biological role, core subunit of the mitochondrial membrane respiratory chain NADH dehydrogenase (Complex I) that is believed to belong to the minimal assembly required for catalysis. Complex I functions in the transfer of electrons from NADH to the respiratory chain. The immediate electron acceptor for the enzyme is believed to be ubiquinone. In Strongylocentrotus purpuratus (Purple sea urchin), this protein is NADH-ubiquinone oxidoreductase chain 4 (ND4).